A 244-amino-acid chain; its full sequence is Small ribosomal subunit protein eS6 (244 aa).

The interval 185 to 244 is disordered; sequence RLQRKRHMRAVKRRRYAKQREEEATYAKLLAKRKKEEREAHAKRRSSARESSLRESKSKA. The span at 186–201 shows a compositional bias: basic residues; that stretch reads LQRKRHMRAVKRRRYA. The span at 231–244 shows a compositional bias: basic and acidic residues; that stretch reads SARESSLRESKSKA.

The protein belongs to the eukaryotic ribosomal protein eS6 family. Post-translationally, ribosomal protein S6 is the major substrate of protein kinases in eukaryote ribosomes.

Component of the 40S small ribosomal subunit. Plays an important role in controlling cell growth and proliferation through the selective translation of particular classes of mRNA. The chain is Small ribosomal subunit protein eS6 (RPS6) from Branchiostoma floridae (Florida lancelet).